The sequence spans 46 residues: Large ribosomal subunit protein bL34c (46 aa).

Belongs to the bacterial ribosomal protein bL34 family.

Its subcellular location is the plastid. It is found in the chloroplast. The protein is Large ribosomal subunit protein bL34c of Pyropia yezoensis (Susabi-nori).